A 428-amino-acid chain; its full sequence is Serine--tRNA ligase (428 aa).

231 to 233 (TSE) serves as a coordination point for L-serine. Residues 262–264 (RRE) and Val-278 each bind ATP. Glu-285 is an L-serine binding site. 349-352 (ELTS) provides a ligand contact to ATP. Thr-384 is an L-serine binding site.

It belongs to the class-II aminoacyl-tRNA synthetase family. Type-1 seryl-tRNA synthetase subfamily. In terms of assembly, homodimer. The tRNA molecule binds across the dimer.

Its subcellular location is the cytoplasm. The catalysed reaction is tRNA(Ser) + L-serine + ATP = L-seryl-tRNA(Ser) + AMP + diphosphate + H(+). The enzyme catalyses tRNA(Sec) + L-serine + ATP = L-seryl-tRNA(Sec) + AMP + diphosphate + H(+). The protein operates within aminoacyl-tRNA biosynthesis; selenocysteinyl-tRNA(Sec) biosynthesis; L-seryl-tRNA(Sec) from L-serine and tRNA(Sec): step 1/1. In terms of biological role, catalyzes the attachment of serine to tRNA(Ser). Is also able to aminoacylate tRNA(Sec) with serine, to form the misacylated tRNA L-seryl-tRNA(Sec), which will be further converted into selenocysteinyl-tRNA(Sec). This chain is Serine--tRNA ligase, found in Bifidobacterium animalis subsp. lactis (strain AD011).